A 155-amino-acid chain; its full sequence is Glutamyl-tRNA(Gln) amidotransferase subunit C, chloroplastic/mitochondrial (155 aa).

The N-terminal 52 residues, 1–52 (MATRALLAVIYASPNRCYISPSRIKIQSLTCSSSSHYYQRQSRKNHRIARSY), are a transit peptide targeting the chloroplast and mitochondrion.

The protein belongs to the GatC family. As to quaternary structure, subunit of the heterotrimeric GatCAB amidotransferase (AdT) complex, composed of A, B and C subunits.

The protein resides in the mitochondrion. The protein localises to the plastid. It is found in the chloroplast. The enzyme catalyses L-glutamyl-tRNA(Gln) + L-glutamine + ATP + H2O = L-glutaminyl-tRNA(Gln) + L-glutamate + ADP + phosphate + H(+). In terms of biological role, allows the formation of correctly charged Gln-tRNA(Gln) through the transamidation of misacylated Glu-tRNA(Gln) in chloroplasts and mitochondria. The reaction takes place in the presence of glutamine and ATP through an activated gamma-phospho-Glu-tRNA(Gln). This chain is Glutamyl-tRNA(Gln) amidotransferase subunit C, chloroplastic/mitochondrial, found in Arabidopsis thaliana (Mouse-ear cress).